The chain runs to 1143 residues: Disease resistance protein Piks-1 (1143 aa).

The interval 1 to 190 (MEAAAMAVTA…PLRIMGGEMQ (190 aa)) is structured coiled coil (CC) domain. The 70-residue stretch at 189 to 258 (MQKIVFKIPM…KVGPAMFLEV (70 aa)) folds into the HMA domain. An HMA-like domain region spans residues 191–264 (KIVFKIPMVD…FLEVSQAKED (74 aa)). The NB-ARC domain maps to 282–570 (HEVKTICILG…WIAEGFVSEE (289 aa)). LRR repeat units follow at residues 681-706 (FKRLRVLDLEDNKDIQDSHLQGICEQ), 708-731 (SLRVRYLGLKGTRIRKLPQEMRKL), 732-754 (KHLEILYVGSTRISELPQEIGEL), 756-777 (HLRILDVRNTDITELPLQIREL), 778-800 (QHLHTLDVRNTPISELPPQVGKL), 802-823 (NLKIMCVRSTGVRELPKEIGEL), 824-848 (NHLQTLDVRNTRVRELPWQAGQISQ), 945-968 (MPNLQTLVLRFEALPRQPITINGT), 979-1002 (DSRVPRIAFHEDAMPNLKLLEFKF), and 1004-1027 (AGPASNDAIGITNLKSLQKVVFRC).

It belongs to the disease resistance NB-LRR family. Interacts with AVR-Pik through its N-terminal part containing the HMA-like domain.

Disease resistance (R) protein that specifically recognizes the AVR-Pik effector avirulence protein from M.oryzae. Resistance proteins guard the plant against pathogens that contain an appropriate avirulence protein via an indirect interaction with this avirulence protein. That triggers a defense system including the hypersensitive response, which restricts the pathogen growth. In Oryza sativa subsp. japonica (Rice), this protein is Disease resistance protein Piks-1.